Consider the following 307-residue polypeptide: 4-hydroxy-tetrahydrodipicolinate synthase (307 aa).

T57 is a binding site for pyruvate. Y145 serves as the catalytic Proton donor/acceptor. The active-site Schiff-base intermediate with substrate is the K173. Pyruvate is bound at residue V215.

The protein belongs to the DapA family. In terms of assembly, homotetramer; dimer of dimers.

It localises to the cytoplasm. The catalysed reaction is L-aspartate 4-semialdehyde + pyruvate = (2S,4S)-4-hydroxy-2,3,4,5-tetrahydrodipicolinate + H2O + H(+). It participates in amino-acid biosynthesis; L-lysine biosynthesis via DAP pathway; (S)-tetrahydrodipicolinate from L-aspartate: step 3/4. Functionally, catalyzes the condensation of (S)-aspartate-beta-semialdehyde [(S)-ASA] and pyruvate to 4-hydroxy-tetrahydrodipicolinate (HTPA). This chain is 4-hydroxy-tetrahydrodipicolinate synthase, found in Leptospira interrogans serogroup Icterohaemorrhagiae serovar copenhageni (strain Fiocruz L1-130).